The chain runs to 332 residues: Holliday junction branch migration complex subunit RuvB (332 aa).

A large ATPase domain (RuvB-L) region spans residues 1–181 (MARILDNDVM…FGITGHMEYY (181 aa)). ATP-binding positions include Leu-20, Arg-21, Gly-62, Lys-65, Thr-66, Thr-67, 128 to 130 (EDF), Arg-171, Tyr-181, and Arg-218. Thr-66 lines the Mg(2+) pocket. Residues 182-252 (QEKDLTEIVE…ITDRALTMLD (71 aa)) form a small ATPAse domain (RuvB-S) region. The segment at 255–332 (REGLDYIDQK…RHLGYPYQNT (78 aa)) is head domain (RuvB-H). DNA is bound by residues Arg-291, Arg-310, Arg-312, and Arg-315.

It belongs to the RuvB family. As to quaternary structure, homohexamer. Forms an RuvA(8)-RuvB(12)-Holliday junction (HJ) complex. HJ DNA is sandwiched between 2 RuvA tetramers; dsDNA enters through RuvA and exits via RuvB. An RuvB hexamer assembles on each DNA strand where it exits the tetramer. Each RuvB hexamer is contacted by two RuvA subunits (via domain III) on 2 adjacent RuvB subunits; this complex drives branch migration. In the full resolvosome a probable DNA-RuvA(4)-RuvB(12)-RuvC(2) complex forms which resolves the HJ.

Its subcellular location is the cytoplasm. It catalyses the reaction ATP + H2O = ADP + phosphate + H(+). Functionally, the RuvA-RuvB-RuvC complex processes Holliday junction (HJ) DNA during genetic recombination and DNA repair, while the RuvA-RuvB complex plays an important role in the rescue of blocked DNA replication forks via replication fork reversal (RFR). RuvA specifically binds to HJ cruciform DNA, conferring on it an open structure. The RuvB hexamer acts as an ATP-dependent pump, pulling dsDNA into and through the RuvAB complex. RuvB forms 2 homohexamers on either side of HJ DNA bound by 1 or 2 RuvA tetramers; 4 subunits per hexamer contact DNA at a time. Coordinated motions by a converter formed by DNA-disengaged RuvB subunits stimulates ATP hydrolysis and nucleotide exchange. Immobilization of the converter enables RuvB to convert the ATP-contained energy into a lever motion, pulling 2 nucleotides of DNA out of the RuvA tetramer per ATP hydrolyzed, thus driving DNA branch migration. The RuvB motors rotate together with the DNA substrate, which together with the progressing nucleotide cycle form the mechanistic basis for DNA recombination by continuous HJ branch migration. Branch migration allows RuvC to scan DNA until it finds its consensus sequence, where it cleaves and resolves cruciform DNA. This chain is Holliday junction branch migration complex subunit RuvB, found in Streptococcus pyogenes serotype M3 (strain ATCC BAA-595 / MGAS315).